The following is a 463-amino-acid chain: MPTILYNTNSSLITKYRRPNASNQYKGFLSKKGHTRLNSKSSGDIWEKDCSHTKNSGNDVSFESEFEKDSVEYLRDLCFSIYPNSLHQKIRSIEALPDLQVNTFIALIFQNFVKSWYGIKIPTDDSKFLTELYNLVQDLITYLKSSKINYHALLLDYIPCLLSSHLKALNDSSQNNDLVYEQYCKLTLYDSKRYPMLFTEIIQSKMSTKSLLQRSFLDSFLNELVFGHIFNSIAEPYYLLEGLNKICIRIKLNSAGNTRNEVTHGKPKCDPWLFVSNVKHKILQMTRLLAYSTSTEAANMNTAEIQETAFLQRYIFTFFTDDFFKLSMRKPFLFSICRTLQHWISKLNALNRVMYRTFDNIVQTKITSPVTIGNLFSLLRHSLFPNDNMMGPPRVLPVGDAFLEFREECISNLWDVCMTYKLDHILAIKRSDIADLIICISKNRDCNKLLIYRIIDCVIAQLP.

This is an uncharacterized protein from Saccharomyces cerevisiae (strain ATCC 204508 / S288c) (Baker's yeast).